The primary structure comprises 367 residues: MSGSSFGSIFKIATWGESHGKGIGVVVDGCPAGLTLNEEMIQTFLNRRKPGQTKYSTPRKEDDLVTILSGVFEGKTTGTPISMMIANETARSADYSEIASFYRPGHADYTFDAKYGFRDYRGGGRSSGRETIGRVAAGAIAAALLKELGIEVFTYTKSIGPIQIDYHKCQKENLTLSPLCMPDLEASQKAEDYLEQCIHNLDSSGGMIECIISGVPAGIGEPVFDKLDAQLAKAIFSIGAVKGFEIGSGFEVAKQLGSENNDGFAFDANGKLIKLTNHSGGILGGISDGSEIIFRAAIKPTPSIKKEQQTVNKSGENINVSIKGRHDPIIVPRAVVVVEAMAALTLADLLLSGMSSKMDYVKKIYQK.

Arg48 contributes to the NADP(+) binding site. Residues 125–127, Gly284, 299–303, and Arg325 each bind FMN; these read RSS and KPTPS.

This sequence belongs to the chorismate synthase family. Homotetramer. It depends on FMNH2 as a cofactor.

The enzyme catalyses 5-O-(1-carboxyvinyl)-3-phosphoshikimate = chorismate + phosphate. It functions in the pathway metabolic intermediate biosynthesis; chorismate biosynthesis; chorismate from D-erythrose 4-phosphate and phosphoenolpyruvate: step 7/7. Its function is as follows. Catalyzes the anti-1,4-elimination of the C-3 phosphate and the C-6 proR hydrogen from 5-enolpyruvylshikimate-3-phosphate (EPSP) to yield chorismate, which is the branch point compound that serves as the starting substrate for the three terminal pathways of aromatic amino acid biosynthesis. This reaction introduces a second double bond into the aromatic ring system. The sequence is that of Chorismate synthase from Lachnoclostridium phytofermentans (strain ATCC 700394 / DSM 18823 / ISDg) (Clostridium phytofermentans).